Here is a 409-residue protein sequence, read N- to C-terminus: ATPase ASNA1 homolog (409 aa).

21–28 (KGGVGKTT) contacts ATP. Residue Asp-62 is part of the active site. 2 residues coordinate ATP: Glu-303 and Asn-330. Zn(2+)-binding residues include Cys-342 and Cys-345.

This sequence belongs to the arsA ATPase family. As to quaternary structure, homodimer.

The protein localises to the cytoplasm. The protein resides in the endoplasmic reticulum. In terms of biological role, ATPase required for the post-translational delivery of tail-anchored (TA) proteins to the endoplasmic reticulum. Recognizes and selectively binds the transmembrane domain of TA proteins in the cytosol. This complex then targets to the endoplasmic reticulum by membrane-bound receptors, where the tail-anchored protein is released for insertion. This process is regulated by ATP binding and hydrolysis. ATP binding drives the homodimer towards the closed dimer state, facilitating recognition of newly synthesized TA membrane proteins. ATP hydrolysis is required for insertion. Subsequently, the homodimer reverts towards the open dimer state, lowering its affinity for the membrane-bound receptor, and returning it to the cytosol to initiate a new round of targeting. The sequence is that of ATPase ASNA1 homolog from Leishmania infantum.